The chain runs to 132 residues: Small ribosomal subunit protein uS8c (132 aa).

The protein belongs to the universal ribosomal protein uS8 family. Part of the 30S ribosomal subunit.

It localises to the plastid. The protein localises to the chloroplast. In terms of biological role, one of the primary rRNA binding proteins, it binds directly to 16S rRNA central domain where it helps coordinate assembly of the platform of the 30S subunit. The polypeptide is Small ribosomal subunit protein uS8c (rps8) (Amborella trichopoda).